The sequence spans 221 residues: Cytidylate kinase (221 aa).

7 to 15 serves as a coordination point for ATP; it reads GPSASGKSS.

Belongs to the cytidylate kinase family. Type 1 subfamily.

The protein localises to the cytoplasm. The catalysed reaction is CMP + ATP = CDP + ADP. The enzyme catalyses dCMP + ATP = dCDP + ADP. This chain is Cytidylate kinase, found in Borreliella burgdorferi (strain ZS7) (Borrelia burgdorferi).